We begin with the raw amino-acid sequence, 662 residues long: Polyunsaturated fatty acid (12S)/(13S)-lipoxygenase, epidermal-type (662 aa).

Residues 2 to 114 (VKYKILVATG…TICLTEGTAL (113 aa)) enclose the PLAT domain. Residues 115–662 (KVTDDTQNLF…PSLVENSVTI (548 aa)) form the Lipoxygenase domain. Fe cation is bound by residues histidine 360, histidine 365, histidine 540, and isoleucine 662.

This sequence belongs to the lipoxygenase family. The cofactor is Fe cation. Expressed in epidermis.

The protein resides in the cytoplasm. The catalysed reaction is (5Z,8Z,11Z,14Z)-eicosatetraenoate + O2 = (12S)-hydroperoxy-(5Z,8Z,10E,14Z)-eicosatetraenoate. The enzyme catalyses 1-O-methyl-(9Z,12Z)-octadecadienoate + O2 = 1-O-methyl-(13S)-hydroperoxy-(9Z,11E)-octadecadienoate. It catalyses the reaction (8Z,11Z,14Z)-eicosatrienoate + O2 = (12S)-hydroperoxy-(8Z,10E,14Z)-eicosatrienoate. It carries out the reaction (5Z,8Z,11Z)-eicosatrienoate + O2 = (12S)-hydroperoxy-(5Z,8Z,10E)-eicosatrienoate. The catalysed reaction is 1-O-methyl-(5Z,8Z,11Z,14Z)-eicosatetraenoate + O2 = 1-O-methyl-(12S)-hydroperoxy-(5Z,8Z,10E,14Z)-eicosatetraenoate. The enzyme catalyses (9Z,12Z)-octadecadienoate + O2 = (13S)-hydroperoxy-(9Z,11E)-octadecadienoate. It catalyses the reaction (4Z,7Z,10Z,13Z,16Z,19Z)-docosahexaenoate + O2 = (14S)-hydroperoxy-(4Z,7Z,10Z,12E,16Z,19Z)-docosahexaenoate. It participates in lipid metabolism; hydroperoxy eicosatetraenoic acid biosynthesis. Its activity is regulated as follows. Arachidonate 12-lipoxygenase activity is decreased when the pH decreases from 7.4 to 6.0. Catalyzes the regio and stereo-specific incorporation of a single molecule of dioxygen into free and esterified polyunsaturated fatty acids generating lipid hydroperoxides that can be further reduced to the corresponding hydroxy species. Shows increasing catalytic activity within the series arachidonic acid &lt; 5,8,11-eicosatrienoic acid &lt; linoleic acid &lt; 8,11,14-eicosatrienoic acid. This is Polyunsaturated fatty acid (12S)/(13S)-lipoxygenase, epidermal-type from Mus musculus (Mouse).